The sequence spans 445 residues: UDP-N-acetylmuramate--L-alanine ligase (445 aa).

108 to 114 contributes to the ATP binding site; it reads GSDGKTT.

Belongs to the MurCDEF family.

The protein localises to the cytoplasm. The catalysed reaction is UDP-N-acetyl-alpha-D-muramate + L-alanine + ATP = UDP-N-acetyl-alpha-D-muramoyl-L-alanine + ADP + phosphate + H(+). It functions in the pathway cell wall biogenesis; peptidoglycan biosynthesis. In terms of biological role, cell wall formation. In Pseudothermotoga lettingae (strain ATCC BAA-301 / DSM 14385 / NBRC 107922 / TMO) (Thermotoga lettingae), this protein is UDP-N-acetylmuramate--L-alanine ligase.